We begin with the raw amino-acid sequence, 249 residues long: Pyridoxine 5'-phosphate synthase (249 aa).

Position 10 (N10) interacts with 3-amino-2-oxopropyl phosphate. 12–13 (DH) provides a ligand contact to 1-deoxy-D-xylulose 5-phosphate. R21 contacts 3-amino-2-oxopropyl phosphate. Residue H46 is the Proton acceptor of the active site. 1-deoxy-D-xylulose 5-phosphate is bound by residues R48 and H53. Catalysis depends on E73, which acts as the Proton acceptor. T103 lines the 1-deoxy-D-xylulose 5-phosphate pocket. The active-site Proton donor is H194. Residues G195 and 216–217 (GH) contribute to the 3-amino-2-oxopropyl phosphate site.

It belongs to the PNP synthase family. Homooctamer; tetramer of dimers.

Its subcellular location is the cytoplasm. It catalyses the reaction 3-amino-2-oxopropyl phosphate + 1-deoxy-D-xylulose 5-phosphate = pyridoxine 5'-phosphate + phosphate + 2 H2O + H(+). Its pathway is cofactor biosynthesis; pyridoxine 5'-phosphate biosynthesis; pyridoxine 5'-phosphate from D-erythrose 4-phosphate: step 5/5. In terms of biological role, catalyzes the complicated ring closure reaction between the two acyclic compounds 1-deoxy-D-xylulose-5-phosphate (DXP) and 3-amino-2-oxopropyl phosphate (1-amino-acetone-3-phosphate or AAP) to form pyridoxine 5'-phosphate (PNP) and inorganic phosphate. The chain is Pyridoxine 5'-phosphate synthase from Rhodospirillum rubrum (strain ATCC 11170 / ATH 1.1.1 / DSM 467 / LMG 4362 / NCIMB 8255 / S1).